The chain runs to 154 residues: Low molecular weight protein-tyrosine-phosphatase PtpA (154 aa).

The Nucleophile role is filled by C8. R14 is a catalytic residue. D120 acts as the Proton donor in catalysis.

The protein belongs to the low molecular weight phosphotyrosine protein phosphatase family.

The enzyme catalyses O-phospho-L-tyrosyl-[protein] + H2O = L-tyrosyl-[protein] + phosphate. Its function is as follows. Dephosphorylates the phosphotyrosine-containing proteins. This chain is Low molecular weight protein-tyrosine-phosphatase PtpA (ptpA), found in Staphylococcus haemolyticus (strain JCSC1435).